The chain runs to 234 residues: Probable ascorbate-specific transmembrane electron transporter 1 (234 aa).

At 1–9 (MGLGVRAAP) the chain is on the cytoplasmic side. Residues 10–30 (FTYVAHALAVAAATMVLVWCI) form a helical membrane-spanning segment. Residues 13 to 217 (VAHALAVAAA…FGASVVVAAV (205 aa)) enclose the Cytochrome b561 domain. Residues 31–48 (HFRGGLAFEATNKNLIFN) are Extracellular-facing. The helical transmembrane segment at 49–69 (VHPVLMLIGYIILGSEAIMVY) threads the bilayer. His-50 is a heme b binding site. L-ascorbate is bound at residue 65–73 (AIMVYKVLP). Over 70–82 (KVLPTWKHDTTKL) the chain is Cytoplasmic. A helical transmembrane segment spans residues 83 to 103 (IHLILHAIALVFGAVGIYCAF). Residues His-84 and His-118 each contribute to the heme b site. Over 104–121 (KFHNESGIANLYSLHSWL) the chain is Extracellular. 114-123 (LYSLHSWLGI) contacts monodehydro-L-ascorbate radical. Residues 122–142 (GIGTICLYGIQWIFGFVAFFF) traverse the membrane as a helical segment. At 143–151 (PRASPSVRK) the chain is on the cytoplasmic side. Residues 152-172 (GVLPWHILFGLFVYILALATA) traverse the membrane as a helical segment. His-157 is a binding site for heme b. Residues 173–194 (ELGFLEKLTFLQSSGLDKYGAE) lie on the Extracellular side of the membrane. A helical membrane pass occupies residues 195 to 215 (AFLVNFTALIVVLFGASVVVA). At 216 to 234 (AVSPARVEEPHEYAPIPES) the chain is on the cytoplasmic side.

Heme b is required as a cofactor.

It is found in the membrane. Functionally, two-heme-containing cytochrome. Catalyzes ascorbate-dependent trans-membrane electron transfer by utilizing a concerted H(+)/e(-) transfer mechanism. The protein is Probable ascorbate-specific transmembrane electron transporter 1 of Oryza sativa subsp. japonica (Rice).